We begin with the raw amino-acid sequence, 401 residues long: Argininosuccinate synthase (401 aa).

Residue 8–16 coordinates ATP; it reads AYSGGLDTS. Tyr85 provides a ligand contact to L-citrulline. Position 115 (Gly115) interacts with ATP. The L-aspartate site is built by Thr117, Asn121, and Asp122. Asn121 provides a ligand contact to L-citrulline. L-citrulline is bound by residues Arg125, Ser173, Glu258, and Tyr270.

The protein belongs to the argininosuccinate synthase family. Type 1 subfamily. In terms of assembly, homotetramer.

The protein localises to the cytoplasm. The catalysed reaction is L-citrulline + L-aspartate + ATP = 2-(N(omega)-L-arginino)succinate + AMP + diphosphate + H(+). The protein operates within amino-acid biosynthesis; L-arginine biosynthesis; L-arginine from L-ornithine and carbamoyl phosphate: step 2/3. The sequence is that of Argininosuccinate synthase from Staphylococcus aureus (strain Mu3 / ATCC 700698).